The sequence spans 82 residues: Toxin NaTx-13 (82 aa).

The LCN-type CS-alpha/beta domain occupies 6 to 70; that stretch reads PGGYPVNQFK…KNSIEVFSCG (65 aa). 4 disulfide bridges follow: C16-C69, C20-C44, C30-C49, and C34-C51.

The protein belongs to the long (4 C-C) scorpion toxin superfamily. Sodium channel inhibitor family. Expressed by the venom gland.

The protein localises to the secreted. Functionally, probable sodium channel inhibitor. The polypeptide is Toxin NaTx-13 (Centruroides sculpturatus (Arizona bark scorpion)).